The sequence spans 359 residues: Glutamine synthetase (359 aa).

The GS beta-grasp domain maps to valine 28 to glycine 107. The region spanning histidine 114 to histidine 359 is the GS catalytic domain. At serine 273 the chain carries Phosphoserine. Threonine 303 carries the post-translational modification Phosphothreonine. Serine 305 carries the phosphoserine modification.

This sequence belongs to the glutamine synthetase family. Homooctamer.

It is found in the cytoplasm. It carries out the reaction L-glutamate + NH4(+) + ATP = L-glutamine + ADP + phosphate + H(+). The sequence is that of Glutamine synthetase (gln1) from Schizosaccharomyces pombe (strain 972 / ATCC 24843) (Fission yeast).